The chain runs to 429 residues: Threonine synthase (429 aa).

At Lys-108 the chain carries N6-(pyridoxal phosphate)lysine.

The protein belongs to the threonine synthase family. Pyridoxal 5'-phosphate is required as a cofactor.

The enzyme catalyses O-phospho-L-homoserine + H2O = L-threonine + phosphate. The protein operates within amino-acid biosynthesis; L-threonine biosynthesis; L-threonine from L-aspartate: step 5/5. Its function is as follows. Catalyzes the gamma-elimination of phosphate from L-phosphohomoserine and the beta-addition of water to produce L-threonine. This is Threonine synthase (thrC) from Buchnera aphidicola subsp. Schizaphis graminum (strain Sg).